The following is a 150-amino-acid chain: Phosphopantetheine adenylyltransferase (150 aa).

Substrate is bound at residue Thr15. ATP-binding positions include 15-16 and His23; that span reads TF. Residues Ile80 and Arg94 each contribute to the substrate site. ATP-binding positions include 95-97, Glu105, and 130-136; these read GIR and LENISSR.

The protein belongs to the bacterial CoaD family. Homohexamer. Mg(2+) serves as cofactor.

It is found in the cytoplasm. It carries out the reaction (R)-4'-phosphopantetheine + ATP + H(+) = 3'-dephospho-CoA + diphosphate. The protein operates within cofactor biosynthesis; coenzyme A biosynthesis; CoA from (R)-pantothenate: step 4/5. Its function is as follows. Reversibly transfers an adenylyl group from ATP to 4'-phosphopantetheine, yielding dephospho-CoA (dPCoA) and pyrophosphate. This Malacoplasma penetrans (strain HF-2) (Mycoplasma penetrans) protein is Phosphopantetheine adenylyltransferase.